The primary structure comprises 361 residues: Glycerophosphodiester phosphodiesterase GDPD1, chloroplastic (361 aa).

The N-terminal 53 residues, 1-53, are a transit peptide targeting the chloroplast; that stretch reads MSLKAIHVSEVPSLDHFPENPSLICSSRKANNKFVVVGHRGHGMNMSQSPDLR. In terms of domain architecture, GP-PDE spans 54–323; it reads FSALKENSIL…DHVEEITEAV (270 aa).

It belongs to the glycerophosphoryl diester phosphodiesterase family. Mg(2+) serves as cofactor. Expressed in roots, shoots, rosette leaves, stems, flowers and siliques.

It localises to the plastid. The protein resides in the chloroplast. It carries out the reaction a sn-glycero-3-phosphodiester + H2O = an alcohol + sn-glycerol 3-phosphate + H(+). Hydrolyzes glycerolphosphoglycerol, glycerophosphocholine and glycerophosphoethanolamine in vitro. May be involved in release of inorganic phosphate (Pi) from phospholipids during Pi starvation. The protein is Glycerophosphodiester phosphodiesterase GDPD1, chloroplastic of Arabidopsis thaliana (Mouse-ear cress).